Consider the following 182-residue polypeptide: Probable peptidyl-prolyl cis-trans isomerase A (182 aa).

The region spanning 13 to 181 (QNATATLHTN…EPVVIDSITI (169 aa)) is the PPIase cyclophilin-type domain. The segment at 161-182 (TTATDGNDRPTEPVVIDSITIS) is disordered.

This sequence belongs to the cyclophilin-type PPIase family.

The protein localises to the cytoplasm. It catalyses the reaction [protein]-peptidylproline (omega=180) = [protein]-peptidylproline (omega=0). PPIases accelerate the folding of proteins. It catalyzes the cis-trans isomerization of proline imidic peptide bonds in oligopeptides. This is Probable peptidyl-prolyl cis-trans isomerase A (ppiA) from Mycobacterium leprae (strain TN).